The chain runs to 217 residues: Formate dehydrogenase, nitrate-inducible, cytochrome b556(Fdn) subunit (217 aa).

Residues 1-11 (MSKSKMIVRTK) lie on the Cytoplasmic side of the membrane. Residues 12-36 (FIDRACHWTVVICFFLVALSGISFF) form a helical membrane-spanning segment. Heme b is bound at residue His-18. Residues 37 to 52 (FPTLQWLTQTFGTPQM) lie on the Periplasmic side of the membrane. Residues 53 to 74 (GRILHPFFGIAIFVALMFMFVR) traverse the membrane as a helical segment. Heme b is bound at residue His-57. Residues 75–110 (FVHHNIPDKKDIPWLLNIVEVLKGNEHKVADVGKYN) are Cytoplasmic-facing. A helical transmembrane segment spans residues 111-134 (AGQKMMFWSIMSMIFVLLVTGVII). Residues 135–150 (WRPYFAQYFPMQVVRY) are Periplasmic-facing. Residues 151-175 (SLLIHAAAGIILIHAILIHMYMAFW) traverse the membrane as a helical segment. Positions 155 and 169 each coordinate heme b. His-169 contributes to the a menaquinone binding site. The Cytoplasmic portion of the chain corresponds to 176-217 (VKGSIKGMIEGKVSRRWAKKHHPRWYREIEKAEAKKESEEGI).

This sequence belongs to the formate dehydrogenase gamma subunit family. As to quaternary structure, trimer of heterotrimers, consisting of subunits alpha, beta and gamma. Heme serves as cofactor.

Its subcellular location is the cell inner membrane. Functionally, formate dehydrogenase allows the bacterium to use formate as major electron donor during anaerobic respiration, when nitrate is used as electron acceptor. Subunit gamma is the cytochrome b556 component of the formate dehydrogenase-N, and also contains a menaquinone reduction site that receives electrons from the beta subunit (FdnH), through its hemes. Formate dehydrogenase-N is part of a system that generates proton motive force, together with the dissimilatory nitrate reductase (Nar). The chain is Formate dehydrogenase, nitrate-inducible, cytochrome b556(Fdn) subunit (fdnI) from Escherichia coli O157:H7.